Consider the following 173-residue polypeptide: uncharacterized protein (173 aa).

Residues 1–21 traverse the membrane as a helical segment; it reads MFIVFYLILIIFIFIYFHVYI.

It to T.pallidum TP0711.

Its subcellular location is the membrane. This is an uncharacterized protein from Borreliella burgdorferi (strain ATCC 35210 / DSM 4680 / CIP 102532 / B31) (Borrelia burgdorferi).